The chain runs to 1029 residues: MREWCMLRESRTNTPRRAAERGKRPGGSSVRGGERRIVTALCYDLVGSTDLMHVMDIEDYQELMSAFQLASKQAIASHSGVMQHEAGDGGVALFPIELEAKDAASLAIRAGLGIVEACKRVGREAGQDDLQVRVGIATSVALVLEGSREGWTREPVTGAALAMAARLQAITAPNSVLVSEETRHLAGRSYAFVFQGSKELKGFAAPEKVWRALGHKVGVDRFYAFGRMGGPLINRENELNTIGQLWDGVLAGQGSVVLIQGDAGIGKSRLLREIRRRTRAKRSKLLFFQCLPGGFRSTLHPLLNNLPEAVSGSAGQMGPTAAAVAALFERNGIRDPAVVDVFSYLLGAQGSRLQSNEDPKAIREKAHRALLRALEAVCRRGPAVVAVEDVHWIDPTSRDLLGEAARIIAKFPVLLVTTSRPSYASEWLDAANPTRLALRPLDSDETRLAIKAKWPEHRLALLPDLFDATERISGGVPLFIEEICQWVSQNVEPDTMRLSESANPSHVSAFESILESRLQQLGTAREVARAAAVAGTQVTLPLLRALLPDFGKSALANAADTLCETGFLTRIRVPGRTAYGFRHTLIQETIYNAVLRKQRQVLHRRLFTAVNQNRGMAAWIDTGALAEHAERAGLVEEAVPLFIAAGKESSSRSAMIEARQFLEHALDLCGQMSESDTAEALKLLALTALGPILIGTVGLSSEPARRLYEDAVEIARRRPMSEQSQWFPIYWGWWLTGQDFRVMHDRALEVRSMLSKANEPEIQLQVNHCIWAIDFNLGRHRETQDAIKAGLALYDEKRAKESRTEFGGHDAKVCGLGQLALSLWLTGRTKASDAALSRMIAFTDRIAHAHSKAHSLDTEAVSAFYRDDFERLTEVSARMADFAKRHKMQSLSGQSLLFSGWAEAHRTGLASGHARFQNGLSLLRELGAVADLPIYLCMHATLLGLAGKIEPAIEVVNEAIGRGEETGHAYWLAELHRCRAILRARAGERKDAVAADLRCAVEIAESQGATALTRRARHSMRELGIVIGR.

Residues 1-23 (MREWCMLRESRTNTPRRAAERGK) are compositionally biased toward basic and acidic residues. The segment at 1 to 31 (MREWCMLRESRTNTPRRAAERGKRPGGSSVR) is disordered. One can recognise a Guanylate cyclase domain in the interval 39–168 (TALCYDLVGS…AALAMAARLQ (130 aa)). 261 to 268 (GDAGIGKS) contacts ATP.

This is an uncharacterized protein from Rhizobium meliloti (strain 1021) (Ensifer meliloti).